Consider the following 66-residue polypeptide: Large ribosomal subunit protein uL29 (66 aa).

The protein belongs to the universal ribosomal protein uL29 family.

The chain is Large ribosomal subunit protein uL29 from Pseudothermotoga lettingae (strain ATCC BAA-301 / DSM 14385 / NBRC 107922 / TMO) (Thermotoga lettingae).